The sequence spans 562 residues: Pentatricopeptide repeat-containing protein At3g22670, mitochondrial (562 aa).

Residues 1–31 (MLTKLRISKLVSYTLPRRIFQRRFLVTNNTA) constitute a mitochondrion transit peptide. PPR repeat units lie at residues 165–199 (SGHTYNAMVDVLGKCRNFDLMWELVNEMNKNEESK), 202–232 (TLDTMSKVMRRLAKSGKYNKAVDAFLEMEKS), 238–268 (DTIAMNSLMDALVKENSIEHAHEVFLKLFDT), 272–306 (DARTFNILIHGFCKARKFDDARAMMDLMKVTEFTP), 307–341 (DVVTYTSFVEAYCKEGDFRRVNEMLEEMRENGCNP), 342–376 (NVVTYTIVMHSLGKSKQVAEALGVYEKMKEDGCVP), 377–411 (DAKFYSSLIHILSKTGRFKDAAEIFEDMTNQGVRR), 412–446 (DVLVYNTMISAALHHSRDEMALRLLKRMEDEEGES), 450–484 (NVETYAPLLKMCCHKKKMKLLGILLHHMVKNDVSI), and 485–519 (DVSTYILLIRGLCMSGKVEEACLFFEEAVRKGMVP).

Belongs to the PPR family. P subfamily.

Its subcellular location is the mitochondrion. This chain is Pentatricopeptide repeat-containing protein At3g22670, mitochondrial, found in Arabidopsis thaliana (Mouse-ear cress).